The primary structure comprises 341 residues: Cyanuric acid amidohydrolase (341 aa).

Residues 1 to 90 (MAPIEILKFP…HVTFFLRSPG (90 aa)) form an RU A region. Residues arginine 51 and 71–72 (SG) contribute to the substrate site. Residues 95-229 (GLSAAVGHTR…CHILVLASTS (135 aa)) form an RU B region. Residue lysine 144 is part of the active site. Residues arginine 176 and 212–213 (SS) contribute to the substrate site. Catalysis depends on serine 212, which acts as the Nucleophile. The tract at residues 235 to 341 (LHAVSRPMAD…SLCLVYETSI (107 aa)) is RU C. Glutamate 273 serves as a coordination point for Mg(2+). Substrate is bound by residues arginine 300 and 319–320 (SG). Mg(2+) is bound by residues alanine 322, glutamine 325, glycine 326, proline 327, and glycine 330.

It belongs to the cyclic amide hydrolase (CyAH) family. Homotetramer.

The catalysed reaction is cyanurate + H2O = 1-carboxybiuret + H(+). The protein operates within xenobiotic degradation; atrazine degradation; biuret from cyanurate: step 1/1. With respect to regulation, inhibited by barbituric acid. Responsible for the hydrolysis of cyanuric acid, an intermediate formed during catabolism of s-triazine based compounds in herbicides such as atrazine and polymers such as melamine. Catalyzes the hydrolytic opening of the s-triazine ring of cyanuric acid (2,4,6-trihydroxy-s-triazine) to yield carbon dioxide and carboxybiuret, which spontaneously decarboxylates to biuret. Only active on cyanuric acid and N-methylisocyanuric acid. The chain is Cyanuric acid amidohydrolase from Sarocladium sp.